The following is a 280-amino-acid chain: MTNIHPTAIVEDGARIGNNVTIEPYAIVKKSVTLCDDVVVKSYAYIDGFTTIGRGTTVWPSAMIGNKPQDLKFKGEKTFVEIGEHCEIREFAMITSSTFEGTTVSIGNNCLIMPWAHIAHNCSVGNNVVFSTHVQLAGHVQVGDCVTIGSMVGVHQFVRIGSYSMVGAMSGIRRDIPPFTIGTGNPYALGGINKVGLQRRQVSFETRLALIKTFKRVFRSDESFQASLESVLEDFGEVPEVRHFVEFCRQPSKRGIERGVDCEASLEEPIDKKEGAFVES.

Belongs to the transferase hexapeptide repeat family. LpxA subfamily. As to quaternary structure, homotrimer.

The protein localises to the cytoplasm. The catalysed reaction is a (3R)-hydroxyacyl-[ACP] + UDP-N-acetyl-alpha-D-glucosamine = a UDP-3-O-[(3R)-3-hydroxyacyl]-N-acetyl-alpha-D-glucosamine + holo-[ACP]. The protein operates within glycolipid biosynthesis; lipid IV(A) biosynthesis; lipid IV(A) from (3R)-3-hydroxytetradecanoyl-[acyl-carrier-protein] and UDP-N-acetyl-alpha-D-glucosamine: step 1/6. In terms of biological role, involved in the biosynthesis of lipid A, a phosphorylated glycolipid that anchors the lipopolysaccharide to the outer membrane of the cell. This chain is Acyl-[acyl-carrier-protein]--UDP-N-acetylglucosamine O-acyltransferase, found in Chlamydia trachomatis serovar L2 (strain ATCC VR-902B / DSM 19102 / 434/Bu).